Here is a 310-residue protein sequence, read N- to C-terminus: MESRARCIFLLLLQILTRARGDILPSVCGHSRDAGKIVGGQDALEGQWPWQVSLWITEDGHICGGSLIHEVWVLTAAHCFRRSLNPSFYHVKVGGLTLSLLEPHSTLVAVRNIFVHPTYLWADASSGDIALVQLDTPLRPSQFTPVCLPAAQTPLTPGTVCWVTGWGATQERDMASVLQELAVPLLDSEDCEKMYHTQGSSLSGERIIQSDMLCAGYVEGQKDSCQGDSGGPLVCSINSSWTQVGITSWGIGCARPYRPGVYTRVPTYVDWIQRILAENHSDAYGYHSSASAAYQMLLPVLLAVALPGSL.

An N-terminal signal peptide occupies residues 1-21 (MESRARCIFLLLLQILTRARG). A propeptide spans 22–36 (DILPSVCGHSRDAGK) (activation peptide). One can recognise a Peptidase S1 domain in the interval 37–277 (IVGGQDALEG…YVDWIQRILA (241 aa)). Cysteines 63 and 79 form a disulfide. Residues His-78 and Asp-128 each act as charge relay system in the active site. Intrachain disulfides connect Cys-161-Cys-235, Cys-191-Cys-214, and Cys-225-Cys-253. The Charge relay system role is filled by Ser-229. Asn-238 and Asn-279 each carry an N-linked (GlcNAc...) asparagine glycan. Ser-281 carries the GPI-anchor amidated serine lipid modification. Residues 282–310 (DAYGYHSSASAAYQMLLPVLLAVALPGSL) constitute a propeptide, removed in mature form.

It belongs to the peptidase S1 family. In terms of tissue distribution, expressed primarily in distal gut.

It is found in the cell membrane. Inhibited by aprotinin, leupeptin, benzamidine and soybean trypsin inhibitor. Partially inhibited by PMSF and DFP. Functionally, selectively cleaves synthetic peptide substrates of trypsin. Activates the epithelial sodium channel ENaC. This is Serine protease 30 (Prss30) from Mus musculus (Mouse).